The following is a 485-amino-acid chain: Choline/ethanolamine transporter flvcr2b (485 aa).

Over 1 to 46 (MDTRFNDINRVKMGDESKSVDGEVNDNTYYSKTDAEVNFEHRYTTP) the chain is Cytoplasmic. A helical membrane pass occupies residues 47-71 (ETRLYKKRWVIVCLFSSYSLCNSYQ). Residues Asn68 and Trp72 each coordinate choline. At 72–89 (WIQYGIINNIFMRFYGVD) the chain is on the extracellular side. Residues 90–117 (SFTIDWMSMIYMLTYIPLIFPVSWLLDK) traverse the membrane as a helical segment. Topologically, residues 118 to 119 (KG) are cytoplasmic. Residues 120–139 (LRVIALVAAALNCAGTWIKV) traverse the membrane as a helical segment. Topologically, residues 140-146 (ASARPDL) are extracellular. The helical transmembrane segment at 147–175 (FPVTFLGQFTCSVAQVFILGMPSRIASVW) threads the bilayer. Choline is bound by residues Gln161 and Leu165. Residues 176 to 180 (FGSDE) lie on the Cytoplasmic side of the membrane. The helical transmembrane segment at 181–206 (VSTACSIGVFGNQLGIAIGFLVPPIL) threads the bilayer. The Extracellular segment spans residues 207–211 (VPNVD). The chain crosses the membrane as a helical span at residues 212–241 (DLDELAAHIRVMFYITAGVATFLFVLVVIV). At 242–277 (FQERPEIPPTLAQAAARRISPESYSYTASILRLLRN) the chain is on the cytoplasmic side. The chain crosses the membrane as a helical span at residues 278 to 308 (KAFILLVITYGLNVGCFYAVSTLLNRMIIEH). Residue Tyr295 participates in choline binding. Residues 309–312 (YPGE) are Extracellular-facing. A helical transmembrane segment spans residues 313–341 (EVNAGRIGLTIVVAGMVGSLICGIWLDRS). Residues 342–343 (KT) are Cytoplasmic-facing. The chain crosses the membrane as a helical span at residues 344–366 (YKQTTLAVYLMSLMGLVIYAFTL). Residues 367 to 369 (DLH) are Extracellular-facing. A helical transmembrane segment spans residues 370–399 (HLWVVFITAGALGFFMTGYLPLGFEFAVEL). At 400–407 (TYPESEGT) the chain is on the cytoplasmic side. A helical membrane pass occupies residues 408-433 (SSGLLNCSAQVFGIIFTICQGKIMDS). Gln417 lines the choline pocket. Residues 434 to 435 (FG) are Extracellular-facing. The chain crosses the membrane as a helical span at residues 436 to 458 (TLAGNLFLCAFLLIGTIITGCIK). The Cytoplasmic portion of the chain corresponds to 459–485 (SDLRRQLANQQAQTADHLDTSPTQTRF).

This sequence belongs to the major facilitator superfamily. Feline leukemia virus subgroup C receptor (TC 2.A.1.28.1) family.

It localises to the cell membrane. It is found in the mitochondrion membrane. The protein localises to the endoplasmic reticulum membrane. The enzyme catalyses choline(out) = choline(in). It carries out the reaction ethanolamine(in) = ethanolamine(out). The catalysed reaction is heme b(in) = heme b(out). Its function is as follows. Choline uniporter that specifically mediates choline uptake at the blood-brain-barrier. Responsible for the majority of choline uptake across the blood-brain-barrier from the circulation into the brain. Choline, a nutrient critical for brain development, is a precursor of phosphatidylcholine, as well as betaine. Also mediates transport of ethanolamine. Choline and ethanolamine transport is not coupled with proton transport and is exclusively driven by the choline gradient across the plasma membrane. Also acts as a heme b transporter. The polypeptide is Choline/ethanolamine transporter flvcr2b (Danio rerio (Zebrafish)).